A 572-amino-acid polypeptide reads, in one-letter code: Light-independent protochlorophyllide reductase subunit N (572 aa).

3 residues coordinate [4Fe-4S] cluster: cysteine 106, cysteine 131, and cysteine 191. The disordered stretch occupies residues 249–268 (SLDSMKLPSGGREKQINDVN).

This sequence belongs to the BchN/ChlN family. In terms of assembly, protochlorophyllide reductase is composed of three subunits; ChlL, ChlN and ChlB. Forms a heterotetramer of two ChlB and two ChlN subunits. The cofactor is [4Fe-4S] cluster.

It is found in the plastid. It localises to the chloroplast. It carries out the reaction chlorophyllide a + oxidized 2[4Fe-4S]-[ferredoxin] + 2 ADP + 2 phosphate = protochlorophyllide a + reduced 2[4Fe-4S]-[ferredoxin] + 2 ATP + 2 H2O. Its pathway is porphyrin-containing compound metabolism; chlorophyll biosynthesis (light-independent). Functionally, component of the dark-operative protochlorophyllide reductase (DPOR) that uses Mg-ATP and reduced ferredoxin to reduce ring D of protochlorophyllide (Pchlide) to form chlorophyllide a (Chlide). This reaction is light-independent. The NB-protein (ChlN-ChlB) is the catalytic component of the complex. The polypeptide is Light-independent protochlorophyllide reductase subunit N (Oltmannsiellopsis viridis (Marine flagellate)).